Reading from the N-terminus, the 161-residue chain is Disulfide bond formation protein B (161 aa).

At Met1–Tyr8 the chain is on the cytoplasmic side. A helical transmembrane segment spans residues Phe9–Tyr25. Residues Leu26–Phe43 lie on the Periplasmic side of the membrane. Cys35 and Cys38 are disulfide-bonded. The chain crosses the membrane as a helical span at residues Ala44–Ala58. Residues Gln59–Ser63 are Cytoplasmic-facing. Residues Leu64–Val81 traverse the membrane as a helical segment. Residues Tyr82–Ala136 lie on the Periplasmic side of the membrane. An intrachain disulfide couples Cys94 to Cys122. A helical membrane pass occupies residues Trp137–Arg155. Residues Arg156 to Arg161 lie on the Cytoplasmic side of the membrane.

The protein belongs to the DsbB family.

The protein resides in the cell inner membrane. Functionally, required for disulfide bond formation in some periplasmic proteins. Acts by oxidizing the DsbA protein. In Cupriavidus pinatubonensis (strain JMP 134 / LMG 1197) (Cupriavidus necator (strain JMP 134)), this protein is Disulfide bond formation protein B.